Consider the following 155-residue polypeptide: SsrA-binding protein (155 aa).

Belongs to the SmpB family.

The protein resides in the cytoplasm. Functionally, required for rescue of stalled ribosomes mediated by trans-translation. Binds to transfer-messenger RNA (tmRNA), required for stable association of tmRNA with ribosomes. tmRNA and SmpB together mimic tRNA shape, replacing the anticodon stem-loop with SmpB. tmRNA is encoded by the ssrA gene; the 2 termini fold to resemble tRNA(Ala) and it encodes a 'tag peptide', a short internal open reading frame. During trans-translation Ala-aminoacylated tmRNA acts like a tRNA, entering the A-site of stalled ribosomes, displacing the stalled mRNA. The ribosome then switches to translate the ORF on the tmRNA; the nascent peptide is terminated with the 'tag peptide' encoded by the tmRNA and targeted for degradation. The ribosome is freed to recommence translation, which seems to be the essential function of trans-translation. This chain is SsrA-binding protein, found in Oenococcus oeni (strain ATCC BAA-331 / PSU-1).